We begin with the raw amino-acid sequence, 227 residues long: Cytochrome c oxidase subunit 2 (227 aa).

The Mitochondrial intermembrane segment spans residues 1–14; the sequence is MAHPFQTGLQDATS. Residues 15–45 traverse the membrane as a helical segment; sequence PIMEELLHFHDHTLMIVFLISSLVLYIISIM. Residues 46–59 lie on the Mitochondrial matrix side of the membrane; that stretch reads LTTKLTHTNTMDAQ. Residues 60–87 traverse the membrane as a helical segment; the sequence is EVETVWTILPAIILIMIALPSLRILYMM. Residues 88 to 227 are Mitochondrial intermembrane-facing; it reads DEINNPSLTV…YFEKWSASML (140 aa). 6 residues coordinate Cu cation: histidine 161, cysteine 196, glutamate 198, cysteine 200, histidine 204, and methionine 207. Glutamate 198 contacts Mg(2+). Tyrosine 218 carries the phosphotyrosine modification.

It belongs to the cytochrome c oxidase subunit 2 family. As to quaternary structure, component of the cytochrome c oxidase (complex IV, CIV), a multisubunit enzyme composed of 14 subunits. The complex is composed of a catalytic core of 3 subunits MT-CO1, MT-CO2 and MT-CO3, encoded in the mitochondrial DNA, and 11 supernumerary subunits COX4I, COX5A, COX5B, COX6A, COX6B, COX6C, COX7A, COX7B, COX7C, COX8 and NDUFA4, which are encoded in the nuclear genome. The complex exists as a monomer or a dimer and forms supercomplexes (SCs) in the inner mitochondrial membrane with NADH-ubiquinone oxidoreductase (complex I, CI) and ubiquinol-cytochrome c oxidoreductase (cytochrome b-c1 complex, complex III, CIII), resulting in different assemblies (supercomplex SCI(1)III(2)IV(1) and megacomplex MCI(2)III(2)IV(2)). Found in a complex with TMEM177, COA6, COX18, COX20, SCO1 and SCO2. Interacts with TMEM177 in a COX20-dependent manner. Interacts with COX20. Interacts with COX16. The cofactor is Cu cation.

The protein localises to the mitochondrion inner membrane. It catalyses the reaction 4 Fe(II)-[cytochrome c] + O2 + 8 H(+)(in) = 4 Fe(III)-[cytochrome c] + 2 H2O + 4 H(+)(out). Functionally, component of the cytochrome c oxidase, the last enzyme in the mitochondrial electron transport chain which drives oxidative phosphorylation. The respiratory chain contains 3 multisubunit complexes succinate dehydrogenase (complex II, CII), ubiquinol-cytochrome c oxidoreductase (cytochrome b-c1 complex, complex III, CIII) and cytochrome c oxidase (complex IV, CIV), that cooperate to transfer electrons derived from NADH and succinate to molecular oxygen, creating an electrochemical gradient over the inner membrane that drives transmembrane transport and the ATP synthase. Cytochrome c oxidase is the component of the respiratory chain that catalyzes the reduction of oxygen to water. Electrons originating from reduced cytochrome c in the intermembrane space (IMS) are transferred via the dinuclear copper A center (CU(A)) of subunit 2 and heme A of subunit 1 to the active site in subunit 1, a binuclear center (BNC) formed by heme A3 and copper B (CU(B)). The BNC reduces molecular oxygen to 2 water molecules using 4 electrons from cytochrome c in the IMS and 4 protons from the mitochondrial matrix. This is Cytochrome c oxidase subunit 2 (MT-CO2) from Ailuropoda melanoleuca (Giant panda).